The chain runs to 250 residues: 3-deoxy-manno-octulosonate cytidylyltransferase (250 aa).

It belongs to the KdsB family.

It localises to the cytoplasm. It carries out the reaction 3-deoxy-alpha-D-manno-oct-2-ulosonate + CTP = CMP-3-deoxy-beta-D-manno-octulosonate + diphosphate. Its pathway is nucleotide-sugar biosynthesis; CMP-3-deoxy-D-manno-octulosonate biosynthesis; CMP-3-deoxy-D-manno-octulosonate from 3-deoxy-D-manno-octulosonate and CTP: step 1/1. It participates in bacterial outer membrane biogenesis; lipopolysaccharide biosynthesis. Functionally, activates KDO (a required 8-carbon sugar) for incorporation into bacterial lipopolysaccharide in Gram-negative bacteria. This is 3-deoxy-manno-octulosonate cytidylyltransferase from Pectobacterium atrosepticum (strain SCRI 1043 / ATCC BAA-672) (Erwinia carotovora subsp. atroseptica).